Reading from the N-terminus, the 420-residue chain is MKTLIARHKAGEHIGICSVCSAHPLVIEAALAFDRNSTRKVLIEATSNQVNQFGGYTGMTPADFREFVFAIANKVGFARERIILGGDHLGPNCWQQENADAAMEKSVELVKAYVRAGFSKIHLDASMSCAGDPIPLAPETVAERAAVLCLAAESVATDCQREQLSYVIGTEVPVPGGEASAIQSVHITQVEDAANTLRTHQKAFIARGLAEALTRVIAIVVQPGVEFDHSNIIHYQAQEAQALAQWIEKTKMVYEAHSTDYQTQAAYRELVRDHFAILKVGPALTFALREAVFALAQIEQELIAPENRSGCLAVIEEVMLDEPQYWKKYYRTGFHDSLLDIRYSLSDRIRYYWPHSRIKNSVETMMVNLEGVDIPLGMISQYLPKQFERIQSGELSAIPHQLIMDKIYDVLRAYRYGCAE.

Belongs to the GatZ/KbaZ family. GatZ subfamily. As to quaternary structure, forms a complex with GatY.

It functions in the pathway carbohydrate metabolism; D-tagatose 6-phosphate degradation; D-glyceraldehyde 3-phosphate and glycerone phosphate from D-tagatose 6-phosphate: step 2/2. Component of the tagatose-1,6-bisphosphate aldolase GatYZ that is required for full activity and stability of the Y subunit. Could have a chaperone-like function for the proper and stable folding of GatY. When expressed alone, GatZ does not show any aldolase activity. Is involved in the catabolism of galactitol. The chain is D-tagatose-1,6-bisphosphate aldolase subunit GatZ from Escherichia coli (strain SMS-3-5 / SECEC).